The sequence spans 186 residues: Large ribosomal subunit protein uL22 (186 aa).

A Phosphoserine modification is found at S158. The disordered stretch occupies residues 159–186 (KATDDEPAKKKLSKKKLQRQKEKMLRSE). The residue at position 161 (T161) is a Phosphothreonine. A compositionally biased stretch (basic and acidic residues) spans 177-186 (RQKEKMLRSE).

It belongs to the universal ribosomal protein uL22 family.

The polypeptide is Large ribosomal subunit protein uL22 (RpL17) (Drosophila melanogaster (Fruit fly)).